Here is a 280-residue protein sequence, read N- to C-terminus: Ataxin-3 homolog (280 aa).

Residues 7-187 enclose the Josephin domain; the sequence is GGMLYHEVQE…QECPMSSSSE (181 aa). Residue Cys-20 is the Nucleophile of the active site. The active-site Proton acceptor is the His-126. Asp-141 is a catalytic residue. Composition is skewed to polar residues over residues 183 to 194 and 221 to 232; these read SSSSEASNSFGQ and DNVNQQRRNQAL. A disordered region spans residues 183–240; that stretch reads SSSSEASNSFGQWLSPEDAERIRKNTSSGSSARNKRSNDNVNQQRRNQALSREEVQAF. The 20-residue stretch at 243–262 folds into the UIM domain; it reads MEDDDLKAAIAASLLDASAA.

It is found in the nucleus. The catalysed reaction is Thiol-dependent hydrolysis of ester, thioester, amide, peptide and isopeptide bonds formed by the C-terminal Gly of ubiquitin (a 76-residue protein attached to proteins as an intracellular targeting signal).. Functionally, interacts with key regulators of transcription and represses transcription. Acts as a histone-binding protein that regulates transcription. Acts as a deubiquitinating enzyme. The protein is Ataxin-3 homolog of Arabidopsis thaliana (Mouse-ear cress).